The following is a 139-amino-acid chain: Large ribosomal subunit protein uL16 (139 aa).

Belongs to the universal ribosomal protein uL16 family. As to quaternary structure, part of the 50S ribosomal subunit.

Binds 23S rRNA and is also seen to make contacts with the A and possibly P site tRNAs. This chain is Large ribosomal subunit protein uL16, found in Koribacter versatilis (strain Ellin345).